The chain runs to 103 residues: Large ribosomal subunit protein eL14 (103 aa).

Belongs to the eukaryotic ribosomal protein eL14 family.

The chain is Large ribosomal subunit protein eL14 from Pyrobaculum arsenaticum (strain DSM 13514 / JCM 11321 / PZ6).